Consider the following 446-residue polypeptide: SWI/SNF chromatin-remodeling accessory subunit 1 (446 aa).

Residues 1–53 form a disordered region; that stretch reads MQTQARPPVPQGPRFNHPATPQQVRRPINAPLPGQTAQIQGNRGPQPPKKKKR. Residues 220–297 enclose the SWIB/MDM2 domain; sequence YQPMKFKLHP…PQRLHQLLQQ (78 aa).

Belongs to the SMARCD family. Component of the multiprotein chromatin-remodeling complexes SWI/SNF: SWI/SNF-A (BAF), SWI/SNF-B (PBAF) and related complexes. The canonical complex contains a catalytic subunit swsn-4, core subunits swsn-1 and swsn-5, and accessory subunits swsn-3, swsn-6, phf-10, dpff-1, swsn-9 and either ham-3/swsn-2.1 or swsn-2.2. May interact with blmp-1. Broadly expressed in all cell types.

It is found in the nucleus. In terms of biological role, involved in transcriptional activation and repression of select genes by chromatin remodeling (alteration of DNA-nucleosome topology). Component of SWI/SNF chromatin remodeling complexes that carry out key enzymatic activities, changing chromatin structure by altering DNA-histone contacts within a nucleosome in an ATP-dependent manner. Required for the blmp-1-mediated transcriptional activation or repression of several hypodermal genes such as bed-3. Involved in regulating differentiation, migration and axon pathfinding of specific serotonergic neurons (HSNs). Probably regulates vulva development through the let-60/Ras pathway. May be involved in regulation of developmental processes in the embryo driven by the Wnt pathway. Involved in gonadogenesis. The polypeptide is SWI/SNF chromatin-remodeling accessory subunit 1 (Caenorhabditis elegans).